A 360-amino-acid chain; its full sequence is Threonine synthase (360 aa).

K69 carries the N6-(pyridoxal phosphate)lysine modification. Pyridoxal 5'-phosphate is bound by residues N95, 196-200, and T326; that span reads GNAGN.

This sequence belongs to the threonine synthase family. As to quaternary structure, homodimer. Requires pyridoxal 5'-phosphate as cofactor.

It catalyses the reaction O-phospho-L-homoserine + H2O = L-threonine + phosphate. The protein operates within amino-acid biosynthesis; L-threonine biosynthesis; L-threonine from L-aspartate: step 5/5. Its function is as follows. Catalyzes the gamma-elimination of phosphate from L-phosphohomoserine and the beta-addition of water to produce L-threonine. This chain is Threonine synthase (thrC), found in Mycobacterium bovis (strain ATCC BAA-935 / AF2122/97).